The following is a 179-amino-acid chain: Large ribosomal subunit protein uL10 (179 aa).

Belongs to the universal ribosomal protein uL10 family. In terms of assembly, part of the ribosomal stalk of the 50S ribosomal subunit. The N-terminus interacts with L11 and the large rRNA to form the base of the stalk. The C-terminus forms an elongated spine to which L12 dimers bind in a sequential fashion forming a multimeric L10(L12)X complex.

Its function is as follows. Forms part of the ribosomal stalk, playing a central role in the interaction of the ribosome with GTP-bound translation factors. The polypeptide is Large ribosomal subunit protein uL10 (Thermomicrobium roseum (strain ATCC 27502 / DSM 5159 / P-2)).